The primary structure comprises 227 residues: Phosphoglycolate phosphatase (227 aa).

D11 functions as the Nucleophile in the catalytic mechanism. Positions 11 and 13 each coordinate Mg(2+). Residue K155 coordinates substrate. The Mg(2+) site is built by D178 and D182.

Belongs to the archaeal SPP-like hydrolase family. It depends on Mg(2+) as a cofactor.

The enzyme catalyses 2-phosphoglycolate + H2O = glycolate + phosphate. Its function is as follows. Catalyzes the dephosphorylation of 2-phosphoglycolate. This chain is Phosphoglycolate phosphatase, found in Haloarcula marismortui (strain ATCC 43049 / DSM 3752 / JCM 8966 / VKM B-1809) (Halobacterium marismortui).